Consider the following 34-residue polypeptide: Mytilin-A (34 aa).

4 cysteine pairs are disulfide-bonded: C2/C27, C6/C29, C10/C31, and C15/C34.

Its subcellular location is the secreted. Has antibacterial activity against A.viridans, B.megaterium, M.luteus, E.faecalis, S.aureus and E.coli. It is active against the marine species A.carrageenovora, P.alginovora and C.drobachiensis. In Mytilus edulis (Blue mussel), this protein is Mytilin-A.